The chain runs to 205 residues: High frequency lysogenization protein HflD homolog (205 aa).

This sequence belongs to the HflD family.

The protein localises to the cytoplasm. Its subcellular location is the cell inner membrane. This chain is High frequency lysogenization protein HflD homolog, found in Shewanella baltica (strain OS223).